The sequence spans 460 residues: Nucleosome assembly protein 1-like 2 (460 aa).

Residues 1-11 (MAESVDHKELS) are compositionally biased toward basic and acidic residues. Disordered stretches follow at residues 1–87 (MAES…DSDR) and 213–238 (DEEE…EDPK). Over residues 213 to 223 (DEEEEEEEDDS) the composition is skewed to acidic residues. Positions 346 to 352 (IKKKQRH) match the Nuclear localization signal motif.

This sequence belongs to the nucleosome assembly protein (NAP) family. As to expression, brain, specifically expressed in neurons.

The protein localises to the nucleus. Acidic protein which may be involved in interactions with other proteins or DNA. This Mus musculus (Mouse) protein is Nucleosome assembly protein 1-like 2 (Nap1l2).